Consider the following 504-residue polypeptide: L-carnitine/gamma-butyrobetaine antiporter (504 aa).

12 consecutive transmembrane segments (helical) span residues 10–30 (IEPK…WLTV), 51–71 (WGWA…WLVF), 92–112 (IFMM…SIEI), 143–163 (GPLP…FFFV), 195–215 (FYLV…TPLV), 231–251 (LDAI…ACGL), 263–283 (SYLS…SFIM), 316–336 (WTVF…IFLA), 347–367 (LCFG…TVLG), 398–418 (WAAL…CFIA), 446–466 (LLVR…LLAL), and 475–495 (AIIA…LSFI).

It belongs to the BCCT transporter (TC 2.A.15) family. CaiT subfamily. As to quaternary structure, homotrimer.

It localises to the cell inner membrane. It catalyses the reaction 4-(trimethylamino)butanoate(in) + (R)-carnitine(out) = 4-(trimethylamino)butanoate(out) + (R)-carnitine(in). The protein operates within amine and polyamine metabolism; carnitine metabolism. Its function is as follows. Catalyzes the exchange of L-carnitine for gamma-butyrobetaine. This Escherichia coli O8 (strain IAI1) protein is L-carnitine/gamma-butyrobetaine antiporter.